The following is a 176-amino-acid chain: Translation initiation factor IF-3 (176 aa).

Belongs to the IF-3 family. As to quaternary structure, monomer.

It localises to the cytoplasm. Its function is as follows. IF-3 binds to the 30S ribosomal subunit and shifts the equilibrium between 70S ribosomes and their 50S and 30S subunits in favor of the free subunits, thus enhancing the availability of 30S subunits on which protein synthesis initiation begins. The protein is Translation initiation factor IF-3 of Rippkaea orientalis (strain PCC 8801 / RF-1) (Cyanothece sp. (strain PCC 8801)).